A 593-amino-acid polypeptide reads, in one-letter code: Efflux pump FUB11 (593 aa).

A disordered region spans residues 1-45 (MAIDPQPSSPSLSSETIANDTIGNDNNVNEPSVEPKTQEHQHTVP). Polar residues predominate over residues 9–30 (SPSLSSETIANDTIGNDNNVNE). N-linked (GlcNAc...) asparagine glycosylation occurs at Asn-19. The next 12 helical transmembrane spans lie at 98–118 (WAFV…SSAY), 135–155 (VATL…LVWA), 167–187 (FFFT…AGSI), 195–215 (FLTG…IADM), 227–247 (MFSG…GFLG), 254–274 (WLHG…TVFI), 337–357 (IYIS…PIVF), 367–387 (IGGL…ISFA), 410–430 (LPPA…FAWT), 438–458 (IVPI…FMAL), 468–488 (IFAA…GAAF), and 503–523 (WASS…FLFY). The tract at residues 570 to 593 (THNSHASAAHSHGHRRSLSYTRSA) is disordered.

Belongs to the major facilitator superfamily. DHA1 family. Polyamines/proton antiporter (TC 2.A.1.2.16) subfamily.

The protein resides in the cell membrane. In terms of biological role, efflux pump involved in export of fusaric acid, a mycotoxin with low to moderate toxicity to animals and humans, but with high phytotoxic properties. Constitutes a self-protecting mechanism of the fungus against critical levels of FSA within the cell. This is Efflux pump FUB11 from Gibberella moniliformis (strain M3125 / FGSC 7600) (Maize ear and stalk rot fungus).